A 228-amino-acid polypeptide reads, in one-letter code: Ribonuclease 3 (228 aa).

One can recognise an RNase III domain in the interval 5-127 (LTALQERLKH…LIGAVYLDAG (123 aa)). Glu40 serves as a coordination point for Mg(2+). The active site involves Asp44. Residues Asp113 and Glu116 each coordinate Mg(2+). The active site involves Glu116. The DRBM domain maps to 154–224 (DPKTELQEWL…AAAMLIRLKA (71 aa)).

The protein belongs to the ribonuclease III family. Homodimer. Requires Mg(2+) as cofactor.

It localises to the cytoplasm. The catalysed reaction is Endonucleolytic cleavage to 5'-phosphomonoester.. Its function is as follows. Digests double-stranded RNA. Involved in the processing of primary rRNA transcript to yield the immediate precursors to the large and small rRNAs (23S and 16S). Processes some mRNAs, and tRNAs when they are encoded in the rRNA operon. Processes pre-crRNA and tracrRNA of type II CRISPR loci if present in the organism. This Variovorax paradoxus (strain S110) protein is Ribonuclease 3.